A 422-amino-acid chain; its full sequence is tRNA(Met) cytidine acetate ligase (422 aa).

Residues 7-20, Gly102, Asn172, and Arg197 contribute to the ATP site; that span reads ITEYNPFHNGHLYH.

This sequence belongs to the TmcAL family.

It localises to the cytoplasm. The enzyme catalyses cytidine(34) in elongator tRNA(Met) + acetate + ATP = N(4)-acetylcytidine(34) in elongator tRNA(Met) + AMP + diphosphate. In terms of biological role, catalyzes the formation of N(4)-acetylcytidine (ac(4)C) at the wobble position of elongator tRNA(Met), using acetate and ATP as substrates. First activates an acetate ion to form acetyladenylate (Ac-AMP) and then transfers the acetyl group to tRNA to form ac(4)C34. In Halothermothrix orenii (strain H 168 / OCM 544 / DSM 9562), this protein is tRNA(Met) cytidine acetate ligase.